The primary structure comprises 234 residues: Biotin transport ATP-binding protein BioM (234 aa).

Residues methionine 1 to arginine 230 form the ABC transporter domain. Glycine 35–serine 42 provides a ligand contact to ATP.

The protein belongs to the ABC transporter superfamily. As to quaternary structure, part of a biotin transporter holocomplex composed of BioM, BioN and BioY. BioMN complexes can be readily purified, but not BioMY complexes. Only the BioMNY complex has ATPase activity.

It is found in the cell inner membrane. Required for biotin uptake under very low (pM) biotin concentrations but not under higher (nM) concentrations. The sequence is that of Biotin transport ATP-binding protein BioM (bioM) from Rhodobacter capsulatus (strain ATCC BAA-309 / NBRC 16581 / SB1003).